A 150-amino-acid polypeptide reads, in one-letter code: Putative antitoxin VapB45 (150 aa).

The tract at residues 124-150 (AQRPVAAGRPRPRPQRPVSDRVSDQRR) is disordered. The span at 141–150 (VSDRVSDQRR) shows a compositional bias: basic and acidic residues.

This sequence belongs to the phD/YefM antitoxin family.

In terms of biological role, possibly the antitoxin component of a type II toxin-antitoxin (TA) system. Its cognate toxin is VapC45 (Potential). The chain is Putative antitoxin VapB45 (vapB45) from Mycobacterium tuberculosis (strain CDC 1551 / Oshkosh).